The following is a 308-amino-acid chain: Aspartate carbamoyltransferase catalytic subunit (308 aa).

Carbamoyl phosphate-binding residues include R57 and T58. K86 is a binding site for L-aspartate. Carbamoyl phosphate is bound by residues R107, H135, and Q138. Residues R168 and R229 each coordinate L-aspartate. 2 residues coordinate carbamoyl phosphate: L268 and P269.

Belongs to the aspartate/ornithine carbamoyltransferase superfamily. ATCase family. In terms of assembly, heterooligomer of catalytic and regulatory chains.

It catalyses the reaction carbamoyl phosphate + L-aspartate = N-carbamoyl-L-aspartate + phosphate + H(+). The protein operates within pyrimidine metabolism; UMP biosynthesis via de novo pathway; (S)-dihydroorotate from bicarbonate: step 2/3. Functionally, catalyzes the condensation of carbamoyl phosphate and aspartate to form carbamoyl aspartate and inorganic phosphate, the committed step in the de novo pyrimidine nucleotide biosynthesis pathway. This is Aspartate carbamoyltransferase catalytic subunit from Pyrococcus furiosus (strain ATCC 43587 / DSM 3638 / JCM 8422 / Vc1).